A 602-amino-acid chain; its full sequence is NAD-reducing hydrogenase HoxS subunit alpha (602 aa).

219 to 228 (GRGGAGFSTG) contributes to the NAD(+) binding site. Position 332-379 (332-379 (GAGAYICGDESALIESCEGKRGTPRVKPPFPVQQGYLGKPTSVNNVET)) interacts with FMN. C499, C502, C505, and C545 together coordinate [4Fe-4S] cluster.

This sequence belongs to the complex I 51 kDa subunit family. Tetramer of an alpha and a gamma subunits (flavin-containing dimer), and a delta and a nickel-containing beta subunit (hydrogenase dimer). It depends on FMN as a cofactor. The cofactor is [4Fe-4S] cluster.

It localises to the cytoplasm. The catalysed reaction is H2 + NAD(+) = NADH + H(+). In terms of biological role, subunits alpha and gamma of HoxS constitute an NADH--oxidoreductase. The protein is NAD-reducing hydrogenase HoxS subunit alpha (hoxF) of Cupriavidus necator (strain ATCC 17699 / DSM 428 / KCTC 22496 / NCIMB 10442 / H16 / Stanier 337) (Ralstonia eutropha).